A 1536-amino-acid polypeptide reads, in one-letter code: Alpha-2-macroglobulin (1536 aa).

The signal sequence occupies residues 1 to 23 (MGMKRLIFLVFLLISFSLFGGYA). The isoglutamyl cysteine thioester (Cys-Gln) cross-link spans 919–922 (CVEQ).

This sequence belongs to the protease inhibitor I39 (alpha-2-macroglobulin) family. Bacterial alpha-2-macroglobulin subfamily.

Protects the bacterial cell from peptidases. This is Alpha-2-macroglobulin from Thermotoga maritima (strain ATCC 43589 / DSM 3109 / JCM 10099 / NBRC 100826 / MSB8).